A 326-amino-acid polypeptide reads, in one-letter code: Glyoxylate/hydroxypyruvate reductase B (326 aa).

Active-site residues include R237 and E266. H285 (proton donor) is an active-site residue.

This sequence belongs to the D-isomer specific 2-hydroxyacid dehydrogenase family. GhrB subfamily. In terms of assembly, homodimer.

Its subcellular location is the cytoplasm. It catalyses the reaction glycolate + NADP(+) = glyoxylate + NADPH + H(+). The enzyme catalyses (R)-glycerate + NAD(+) = 3-hydroxypyruvate + NADH + H(+). The catalysed reaction is (R)-glycerate + NADP(+) = 3-hydroxypyruvate + NADPH + H(+). Catalyzes the NADPH-dependent reduction of glyoxylate and hydroxypyruvate into glycolate and glycerate, respectively. This Yersinia pestis bv. Antiqua (strain Nepal516) protein is Glyoxylate/hydroxypyruvate reductase B.